The following is a 289-amino-acid chain: Urease accessory protein UreD (289 aa).

This sequence belongs to the UreD family. In terms of assembly, ureD, UreF and UreG form a complex that acts as a GTP-hydrolysis-dependent molecular chaperone, activating the urease apoprotein by helping to assemble the nickel containing metallocenter of UreC. The UreE protein probably delivers the nickel.

It is found in the cytoplasm. Functionally, required for maturation of urease via the functional incorporation of the urease nickel metallocenter. In Cupriavidus pinatubonensis (strain JMP 134 / LMG 1197) (Cupriavidus necator (strain JMP 134)), this protein is Urease accessory protein UreD.